We begin with the raw amino-acid sequence, 641 residues long: Probable potassium transport system protein Kup (641 aa).

A compositionally biased stretch (polar residues) spans 1 to 14 (MALDSESSASNRQG). Positions 1–20 (MALDSESSASNRQGSRNEQD) are disordered. Transmembrane regions (helical) follow at residues 29-49 (LCLT…LYAF), 69-89 (ILSL…LLII), 120-140 (VLIV…MITP), 156-176 (PQLT…LFMV), 188-208 (FGPI…NGII), 236-256 (VLGG…DMGH), 267-287 (FALV…LLLL), 307-327 (LVGL…SGVF), 355-375 (VYVP…VLHF), 384-404 (AFGI…FFVM), 410-430 (WNIL…LAFF), and 437-457 (ITDG…LMIT).

This sequence belongs to the HAK/KUP transporter (TC 2.A.72) family.

It localises to the cell inner membrane. It catalyses the reaction K(+)(in) + H(+)(in) = K(+)(out) + H(+)(out). Transport of potassium into the cell. Likely operates as a K(+):H(+) symporter. This chain is Probable potassium transport system protein Kup, found in Nitrosomonas eutropha (strain DSM 101675 / C91 / Nm57).